The sequence spans 179 residues: Pectinesterase inhibitor 5 (179 aa).

The first 25 residues, 1 to 25 (MATMLINHMLFLTSLLIVVFPVANA), serve as a signal peptide directing secretion. Cystine bridges form between Cys35–Cys44 and Cys101–Cys141.

This sequence belongs to the PMEI family. In terms of tissue distribution, expressed in seeds, buds, and mature flowers.

It localises to the secreted. The protein localises to the extracellular space. Its subcellular location is the apoplast. Pectin methylesterase (PME) inhibitor that targets PME from seeds and modulates PME activity and pectin methylesterification during seed germination. The sequence is that of Pectinesterase inhibitor 5 from Arabidopsis thaliana (Mouse-ear cress).